Consider the following 300-residue polypeptide: Acetyl-coenzyme A carboxylase carboxyl transferase subunit beta (300 aa).

Positions 24-293 (LWTNCESCSQ…NAPGAALGGA (270 aa)) constitute a CoA carboxyltransferase N-terminal domain. Residues C28, C31, C47, and C50 each contribute to the Zn(2+) site. The segment at 28 to 50 (CESCSQMILVKDLQKAMNVCPHC) adopts a C4-type zinc-finger fold.

Belongs to the AccD/PCCB family. In terms of assembly, acetyl-CoA carboxylase is a heterohexamer composed of biotin carboxyl carrier protein (AccB), biotin carboxylase (AccC) and two subunits each of ACCase subunit alpha (AccA) and ACCase subunit beta (AccD). Requires Zn(2+) as cofactor.

The protein localises to the cytoplasm. It carries out the reaction N(6)-carboxybiotinyl-L-lysyl-[protein] + acetyl-CoA = N(6)-biotinyl-L-lysyl-[protein] + malonyl-CoA. Its pathway is lipid metabolism; malonyl-CoA biosynthesis; malonyl-CoA from acetyl-CoA: step 1/1. Functionally, component of the acetyl coenzyme A carboxylase (ACC) complex. Biotin carboxylase (BC) catalyzes the carboxylation of biotin on its carrier protein (BCCP) and then the CO(2) group is transferred by the transcarboxylase to acetyl-CoA to form malonyl-CoA. The chain is Acetyl-coenzyme A carboxylase carboxyl transferase subunit beta from Gluconacetobacter diazotrophicus (strain ATCC 49037 / DSM 5601 / CCUG 37298 / CIP 103539 / LMG 7603 / PAl5).